The chain runs to 388 residues: Succinate--CoA ligase [ADP-forming] subunit beta (388 aa).

In terms of domain architecture, ATP-grasp spans lysine 9–histidine 244. ATP contacts are provided by residues lysine 46, glycine 53 to glycine 55, glutamate 99, threonine 102, and glutamate 107. Mg(2+)-binding residues include asparagine 199 and aspartate 213. Residues asparagine 264 and glycine 321–valine 323 contribute to the substrate site.

It belongs to the succinate/malate CoA ligase beta subunit family. As to quaternary structure, heterotetramer of two alpha and two beta subunits. The cofactor is Mg(2+).

It catalyses the reaction succinate + ATP + CoA = succinyl-CoA + ADP + phosphate. It carries out the reaction GTP + succinate + CoA = succinyl-CoA + GDP + phosphate. The protein operates within carbohydrate metabolism; tricarboxylic acid cycle; succinate from succinyl-CoA (ligase route): step 1/1. Its function is as follows. Succinyl-CoA synthetase functions in the citric acid cycle (TCA), coupling the hydrolysis of succinyl-CoA to the synthesis of either ATP or GTP and thus represents the only step of substrate-level phosphorylation in the TCA. The beta subunit provides nucleotide specificity of the enzyme and binds the substrate succinate, while the binding sites for coenzyme A and phosphate are found in the alpha subunit. In Edwardsiella ictaluri (strain 93-146), this protein is Succinate--CoA ligase [ADP-forming] subunit beta.